We begin with the raw amino-acid sequence, 137 residues long: Large ribosomal subunit protein uL16 (137 aa).

It belongs to the universal ribosomal protein uL16 family. As to quaternary structure, part of the 50S ribosomal subunit.

Its function is as follows. Binds 23S rRNA and is also seen to make contacts with the A and possibly P site tRNAs. The protein is Large ribosomal subunit protein uL16 of Nitrobacter winogradskyi (strain ATCC 25391 / DSM 10237 / CIP 104748 / NCIMB 11846 / Nb-255).